A 524-amino-acid chain; its full sequence is Cytochrome P450 monooxygenase patH (524 aa).

Topologically, residues 1-4 are cytoplasmic; sequence MEPF. A helical transmembrane segment spans residues 5–22; it reads LLLLLVLLPAIVLVRYAF. Residues 23 to 524 lie on the Lumenal side of the membrane; that stretch reads TYGHRTSTMP…ADVFSRFTEG (502 aa). The N-linked (GlcNAc...) asparagine glycan is linked to N266. A heme-binding site is contributed by C442.

This sequence belongs to the cytochrome P450 family. The cofactor is heme.

It localises to the endoplasmic reticulum membrane. It catalyses the reaction 3-methylphenol + reduced [NADPH--hemoprotein reductase] + O2 = 3-hydroxybenzyl alcohol + oxidized [NADPH--hemoprotein reductase] + H2O + H(+). It functions in the pathway mycotoxin biosynthesis; patulin biosynthesis. Cytochrome P450 monooxygenase; part of the gene cluster that mediates the biosynthesis of patulin, an acetate-derived tetraketide mycotoxin produced by several fungal species that shows antimicrobial properties against several bacteria. PatH catalyzes the conversion of m-cresol into m-hydroxybenzyl alcohol. The pathway begins with the synthesis of 6-methylsalicylic acid by the polyketide synthase (PKS) patK via condensation of acetate and malonate units. The 6-methylsalicylic acid decarboxylase patG then catalyzes the decarboxylation of 6-methylsalicylic acid to yield m-cresol (also known as 3-methylphenol). These first reactions occur in the cytosol. The intermediate m-cresol is then transported into the endoplasmic reticulum where the cytochrome P450 monooxygenase patH converts it to m-hydroxybenzyl alcohol, which is further converted to gentisyl alcohol by the cytochrome P450 monooxygenase patI. The oxidoreductases patJ and patO further convert gentisyl alcohol to isoepoxydon in the vacuole. PatN catalyzes then the transformation of isoepoxydon into phyllostine. The cluster protein patF is responsible for the conversion from phyllostine to neopatulin whereas the alcohol dehydrogenase patD converts neopatulin to E-ascladiol. The steps between isoepoxydon and E-ascladiol occur in the cytosol, and E-ascladiol is probably secreted to the extracellular space by one of the cluster-specific transporters patC or patM. Finally, the secreted patulin synthase patE catalyzes the conversion of E-ascladiol to patulin. This Penicillium expansum (Blue mold rot fungus) protein is Cytochrome P450 monooxygenase patH.